We begin with the raw amino-acid sequence, 322 residues long: MMESGEALLKKLDGRLSGLRGRLTPDTGMDKITWFRAGGPAQVLFQPSDEEDLSAFLKAVPEEIPLLVVGIGSNLLVRDGGVPGFVVRLSAKGFGEVEQVCDTQLRAGAAAPDKRVAAAALEAGLAGFHFYHGIPGGVGGALRMNAGANGVETRERVVEVRALDRKGEVHVLSNADMGYAYRHSSASPDLIFTSVLFEGVPGERDDIRRAMDEVQHHRETVQPVREKTGGSTFKNPEGTSAWKEIDKAGCRGLRVGGAQMSEMHCNFMINTGNATGHDLETLGETVRARVFENSGIRLHWEIKRLGLFREGEQIEEFLGKII.

In terms of domain architecture, FAD-binding PCMH-type spans 36–202; sequence RAGGPAQVLF…TSVLFEGVPG (167 aa). The active site involves Arg-182. Ser-231 serves as the catalytic Proton donor. Glu-301 is a catalytic residue.

It belongs to the MurB family. FAD is required as a cofactor.

The protein localises to the cytoplasm. It catalyses the reaction UDP-N-acetyl-alpha-D-muramate + NADP(+) = UDP-N-acetyl-3-O-(1-carboxyvinyl)-alpha-D-glucosamine + NADPH + H(+). It participates in cell wall biogenesis; peptidoglycan biosynthesis. Cell wall formation. The protein is UDP-N-acetylenolpyruvoylglucosamine reductase of Brucella suis biovar 1 (strain 1330).